We begin with the raw amino-acid sequence, 417 residues long: Alpha-ionylideneethane synthase aba3 (417 aa).

This sequence belongs to the alpha-ionylideneethane synthase family.

Its pathway is hormone biosynthesis. Alpha-ionylideneethane synthase; part of the gene cluster that mediates the biosynthesis of abscisic acid (ABA), a phytohormone that acts antagonistically toward salicylic acid (SA), jasmonic acid (JA) and ethylene (ETH) signaling, to impede plant defense responses. The first step of the pathway catalyzes the reaction from farnesyl diphosphate to alpha-ionylideneethane performed by the alpha-ionylideneethane synthase aba3 via a three-step reaction mechanism involving 2 neutral intermediates, beta-farnesene and allofarnesene. The cytochrome P450 monooxygenase aba1 might then be involved in the conversion of alpha-ionylideneethane to alpha-ionylideneacetic acid. Alpha-ionylideneacetic acid is further converted to abscisic acid in 2 steps involving the cytochrome P450 monooxygenase aba2 and the short-chain dehydrogenase/reductase aba4, via the intermediates 1'-deoxy-ABA or 1',4'-trans-diol-ABA, depending on the order of action of these 2 enzymes. Aba2 is responsible for the hydroxylation of carbon atom C-1' and aba4 might be involved in the oxidation of the C-4' carbon atom. The polypeptide is Alpha-ionylideneethane synthase aba3 (Botryotinia fuckeliana (Noble rot fungus)).